The sequence spans 566 residues: 3'-5' exoribonuclease parn-1 (566 aa).

4 residues coordinate a divalent metal cation: Asp29, Glu31, Asp283, and Asp379.

It belongs to the CAF1 family. Requires a divalent metal cation as cofactor. Expressed in germline cells.

The protein resides in the cytoplasm. In terms of biological role, involved in transcriptome surveillance. Required for piwi-interacting RNAs (piRNAs) 3'-end trimming, which is important for both fertility and piRNA-directed gene silencing. Has 3' to 5' exonuclease activity in vitro. The protein is 3'-5' exoribonuclease parn-1 of Caenorhabditis elegans.